The sequence spans 869 residues: Protein translocase subunit SecA (869 aa).

ATP contacts are provided by residues glutamine 85, 103–107, and aspartate 508; that span reads GEGKT.

Belongs to the SecA family. As to quaternary structure, monomer and homodimer. Part of the essential Sec protein translocation apparatus which comprises SecA, SecYEG and auxiliary proteins SecDF. Other proteins may also be involved.

The protein resides in the cell membrane. Its subcellular location is the cytoplasm. The catalysed reaction is ATP + H2O + cellular proteinSide 1 = ADP + phosphate + cellular proteinSide 2.. Functionally, part of the Sec protein translocase complex. Interacts with the SecYEG preprotein conducting channel. Has a central role in coupling the hydrolysis of ATP to the transfer of proteins into and across the cell membrane, serving as an ATP-driven molecular motor driving the stepwise translocation of polypeptide chains across the membrane. The chain is Protein translocase subunit SecA from Deinococcus deserti (strain DSM 17065 / CIP 109153 / LMG 22923 / VCD115).